The primary structure comprises 459 residues: Cysteine--tRNA ligase (459 aa).

Cys-29 contacts Zn(2+). The 'HIGH' region signature appears at 31–41; it reads MTVYDLCHLGH. 3 residues coordinate Zn(2+): Cys-213, His-238, and Glu-242. A 'KMSKS' region motif is present at residues 270-274; it reads KMSKS. Lys-273 serves as a coordination point for ATP.

This sequence belongs to the class-I aminoacyl-tRNA synthetase family. Monomer. It depends on Zn(2+) as a cofactor.

The protein localises to the cytoplasm. It catalyses the reaction tRNA(Cys) + L-cysteine + ATP = L-cysteinyl-tRNA(Cys) + AMP + diphosphate. In Albidiferax ferrireducens (strain ATCC BAA-621 / DSM 15236 / T118) (Rhodoferax ferrireducens), this protein is Cysteine--tRNA ligase.